The chain runs to 592 residues: Arginine--tRNA ligase (592 aa).

The 'HIGH' region motif lies at 112 to 122 (VNPNKELHVGH).

Belongs to the class-I aminoacyl-tRNA synthetase family. As to quaternary structure, monomer.

It localises to the cytoplasm. The catalysed reaction is tRNA(Arg) + L-arginine + ATP = L-arginyl-tRNA(Arg) + AMP + diphosphate. This Thermus thermophilus (strain ATCC 27634 / DSM 579 / HB8) protein is Arginine--tRNA ligase.